The primary structure comprises 156 residues: Small ribosomal subunit protein uS7 (156 aa).

Belongs to the universal ribosomal protein uS7 family. As to quaternary structure, part of the 30S ribosomal subunit. Contacts proteins S9 and S11.

One of the primary rRNA binding proteins, it binds directly to 16S rRNA where it nucleates assembly of the head domain of the 30S subunit. Is located at the subunit interface close to the decoding center, probably blocks exit of the E-site tRNA. The chain is Small ribosomal subunit protein uS7 from Synechococcus sp. (strain RCC307).